We begin with the raw amino-acid sequence, 201 residues long: Recombination protein RecR (201 aa).

The C4-type zinc-finger motif lies at 60 to 75; the sequence is CSCCGNVDTSDPCTIC. Residues 83–178 enclose the Toprim domain; the sequence is ATLIVVEDVS…RVTRLAHGVP (96 aa).

The protein belongs to the RecR family.

Functionally, may play a role in DNA repair. It seems to be involved in an RecBC-independent recombinational process of DNA repair. It may act with RecF and RecO. This is Recombination protein RecR from Brucella abortus biovar 1 (strain 9-941).